The chain runs to 1061 residues: MSRFAEVDDQYDPDAVEDRVFDYWDEVDAYERTVEHRADGEDFFFVDGPPYTSGSAHMGTTWNKTLKDAYIRYHRMRGYNVTDRPGYDMHGLPIETKVEERLGFDNKKDIEEFGEQNFIDECKSFAEEQLEGLQEDFKSFGVWMDWDDPYKTVDPEYMEAAWWGFSKAHDRDLVEQGQRSISQCPRCETAIANNEVEYDHVEDPSIYVKFPLAEREGHLVIWTTTPWTVPANTFVAVDEEMTYQAIEVDTGDGTETLYVGEPCVEDVVDHGGYEDYEVVGEHEGSDLVGWRYEHPLREEVPEAPAFEGALEVYGADYVEADRTGLVHSAPGHGEVDFERGQELGLSVFCPVGPDGVYEDAAGDYAGQFVKDADAAIMDDLEAKGLLLSRGTVNHDYGHCWRCDTPIIQMVTDQWFITVTDIKDELLANMEESEWFPQEARDNRFRSFIEESPDWNVSRQRYWGIPIPIWTPDDWSGDVEEAIVVSTREELAERVDQDIDPESVDLHKDTVDDLTITADGTTYTRVPDVFDVWLDSSVASWGTLGYPGNEDDFEELWPADLIMEAHDQTRGWFWSQLGMGSAALGEAPYETVLMHGWALAEDGRKMSKSIGNIVAPQEAIDRHGADPMRLFLLTQNPQGDDMRFSWDEMENRQRDLNILWNVFRFPLPYMRLDDFDPDAVALDEAALETVDEWVLSRLSTVTAEMTDHWENFRQDKALDELLAFIVEDVSRFYIQVVRERMWEEETSESKLAAYATLHHVLVETTKLLAPYAPFVAEEIYGTLTGDGGHETVHMADWPDPDERFRDPQLETDVDIVAAVEEAGSNARQQAERKLRWPVTRVVVAADDDRAAEAVDRHRDLLRDRLNAREIELVEPGSDWEELSYTARADMSVLGPTFGDEAGEVMNAINAVSVTDTAVEALEAAVETELGRDIELTDEMVSFNTETPEGVEGTAFTVDGDDRGVVYVDTALTEDIESEGYAREVIRRVQEMRKDLDLDIEAEIRVDLDIADERVATLVDEHEGLIADEVRAAEFADLNAGHERVWDVESTDITITIDPVSER.

Positions 50-60 (PYTSGSAHMGT) match the 'HIGH' region motif. A 'KMSKS' region motif is present at residues 604–608 (KMSKS). Lys607 serves as a coordination point for ATP.

The protein belongs to the class-I aminoacyl-tRNA synthetase family. IleS type 2 subfamily. Monomer. Zn(2+) is required as a cofactor.

The protein resides in the cytoplasm. It catalyses the reaction tRNA(Ile) + L-isoleucine + ATP = L-isoleucyl-tRNA(Ile) + AMP + diphosphate. Functionally, catalyzes the attachment of isoleucine to tRNA(Ile). As IleRS can inadvertently accommodate and process structurally similar amino acids such as valine, to avoid such errors it has two additional distinct tRNA(Ile)-dependent editing activities. One activity is designated as 'pretransfer' editing and involves the hydrolysis of activated Val-AMP. The other activity is designated 'posttransfer' editing and involves deacylation of mischarged Val-tRNA(Ile). The chain is Isoleucine--tRNA ligase from Natronomonas pharaonis (strain ATCC 35678 / DSM 2160 / CIP 103997 / JCM 8858 / NBRC 14720 / NCIMB 2260 / Gabara) (Halobacterium pharaonis).